The chain runs to 489 residues: MTHQIVTTQYGKVKGTTENGVHKWKGIPYAKPPVGQWRFKAPEPPEVWEDVLDATAYGSICPQPSDLLSLSYTELPRQSEDCLYVNVFAPDTPSKNLPVMVWIHGGAFYLGAGSEPLYDGSKLAAQGEVIVVTLNYRLGPFGFLHLSSFNEAYSDNLGLLDQAAALKWVRENISAFGGDPDNVTVFGESAGGMSIAALLAMPAAKGLFQKAIMESGASRTMTKEQAASTSAAFLQVLGINEGQLDKLHTVSAEDLLKAADQLRIAEKENIFQLFFQPALDPKTLPEEPEKAIAEGAASGIPLLIGTTRDEGYLFFTPDSDVHSQETLDAALEYLLGKPLAEKVADLYPRSLESQIHMMTDLLFWRPAVAYASAQSHYAPVWMYRFDWHPKKPPYNKAFHALELPFVFGNLDGLERMAKAEITDEVKQLSHTIQSAWITFAKTGNPSTEAVNWPAYHEETRETLILDSEITIENDPESEKRQKLFPSKGE.

Ser189 serves as the catalytic Acyl-ester intermediate. Ser189 is subject to Phosphoserine. Residues Glu310 and His399 each act as charge relay system in the active site.

The protein belongs to the type-B carboxylesterase/lipase family. In terms of assembly, monomer.

Its function is as follows. Catalyzes hydrolysis of several beta-lactam antibiotic PNB esters to the corresponding free acid and PNB alcohol. The protein is Para-nitrobenzyl esterase (pnbA) of Bacillus subtilis (strain 168).